The sequence spans 292 residues: Ribosomal protein L11 methyltransferase (292 aa).

S-adenosyl-L-methionine-binding residues include Thr144, Gly165, Asp187, and Asn229.

This sequence belongs to the methyltransferase superfamily. PrmA family.

Its subcellular location is the cytoplasm. The enzyme catalyses L-lysyl-[protein] + 3 S-adenosyl-L-methionine = N(6),N(6),N(6)-trimethyl-L-lysyl-[protein] + 3 S-adenosyl-L-homocysteine + 3 H(+). Functionally, methylates ribosomal protein L11. This Pseudomonas putida (strain W619) protein is Ribosomal protein L11 methyltransferase.